A 140-amino-acid chain; its full sequence is Large ribosomal subunit protein uL11 (140 aa).

This sequence belongs to the universal ribosomal protein uL11 family. As to quaternary structure, part of the ribosomal stalk of the 50S ribosomal subunit. Interacts with L10 and the large rRNA to form the base of the stalk. L10 forms an elongated spine to which L12 dimers bind in a sequential fashion forming a multimeric L10(L12)X complex. One or more lysine residues are methylated.

In terms of biological role, forms part of the ribosomal stalk which helps the ribosome interact with GTP-bound translation factors. This chain is Large ribosomal subunit protein uL11, found in Enterococcus faecalis (strain ATCC 700802 / V583).